The primary structure comprises 171 residues: 2-C-methyl-D-erythritol 2,4-cyclodiphosphate synthase (171 aa).

A divalent metal cation-binding residues include Asp-8 and His-10. Residues 8–10 (DVH) and 34–35 (HS) each bind 4-CDP-2-C-methyl-D-erythritol 2-phosphate. His-42 provides a ligand contact to a divalent metal cation. Residues 56-58 (DIG), 61-65 (FPDTD), 132-135 (TTTE), Phe-139, and Arg-142 contribute to the 4-CDP-2-C-methyl-D-erythritol 2-phosphate site.

It belongs to the IspF family. As to quaternary structure, homotrimer. A divalent metal cation is required as a cofactor.

The catalysed reaction is 4-CDP-2-C-methyl-D-erythritol 2-phosphate = 2-C-methyl-D-erythritol 2,4-cyclic diphosphate + CMP. It functions in the pathway isoprenoid biosynthesis; isopentenyl diphosphate biosynthesis via DXP pathway; isopentenyl diphosphate from 1-deoxy-D-xylulose 5-phosphate: step 4/6. Involved in the biosynthesis of isopentenyl diphosphate (IPP) and dimethylallyl diphosphate (DMAPP), two major building blocks of isoprenoid compounds. Catalyzes the conversion of 4-diphosphocytidyl-2-C-methyl-D-erythritol 2-phosphate (CDP-ME2P) to 2-C-methyl-D-erythritol 2,4-cyclodiphosphate (ME-CPP) with a corresponding release of cytidine 5-monophosphate (CMP). In Geotalea daltonii (strain DSM 22248 / JCM 15807 / FRC-32) (Geobacter daltonii), this protein is 2-C-methyl-D-erythritol 2,4-cyclodiphosphate synthase.